The sequence spans 215 residues: Formate dehydrogenase subunit beta (215 aa).

In terms of domain architecture, 4Fe-4S ferredoxin-type 1 spans 3–32 (KGFFVDTTRCTACRGCQVACKQWHGNPATP). Residues Cys-12, Cys-15, Cys-18, Cys-22, Cys-73, Cys-76, Cys-81, Cys-121, Cys-138, Cys-141, Cys-153, and Cys-157 each contribute to the [4Fe-4S] cluster site. The 4Fe-4S ferredoxin-type 2 domain maps to 129–168 (VAESNQMAKCDMCIDRITNGLRPACVTSCPTGAMNFGDLS).

In terms of assembly, heterodimer of alpha (FdhA) and beta (FdhB) subunits. [4Fe-4S] cluster is required as a cofactor.

Its subcellular location is the periplasm. In terms of biological role, beta chain of the formate dehydrogenase (FDH) catalyzes the reversible two-electron oxidation of formate to carbon dioxide. FDH loses activity in the presence of air, but this activity can be restored. This chain is an electron transfer unit. This Megalodesulfovibrio gigas (strain ATCC 19364 / DSM 1382 / NCIMB 9332 / VKM B-1759) (Desulfovibrio gigas) protein is Formate dehydrogenase subunit beta.